The following is a 228-amino-acid chain: MKISFHGQSCIKIITGDTTILVDPFISGNEKCDLKAEEQMPDFIVLSHGHDDHVGDTVEIAKNSGATVICNADLASFLAVEDGLENMAPMHIGGKRQFSFGQVKLTQAFHGSQTVRDGRIVNLGFPTGIVFTIEDKNIYFAGDTGLFSDMKLIGELNPLDVAFLPIGDNFTMGPEDAAIAARFLQAKLVVPMHYNTFPLIAQDPHKFVASLDEGITGKVLEIGESIEI.

The protein belongs to the UPF0173 family.

This Listeria monocytogenes serotype 4a (strain HCC23) protein is UPF0173 metal-dependent hydrolase LMHCC_0991.